The chain runs to 335 residues: NAC domain-containing protein 40 (335 aa).

The NAC domain occupies 14–156; the sequence is LFPGFRFSPT…ALVVCRLRKN (143 aa). A DNA-binding region spans residues 112 to 162; the sequence is VGTKRTLVFHIGRAPRGERTEWIMHEYCIHGAPQDALVVCRLRKNADFRAS. The span at 245–254 shows a compositional bias: polar residues; the sequence is PTNPTHQETI. Positions 245–267 are disordered; sequence PTNPTHQETISSESSSKRSKCGI. A helical transmembrane segment spans residues 313–333; that stretch reads VLATTVFLAILFSFFWTVLIA.

In terms of processing, proteolytically cleaved, probably by metalloprotease activity. This cleavage mediates a translocation from the plasma membrane to the nucleus. In terms of tissue distribution, expressed in seeds, leaves, roots and inflorescence. Expressed in roots, rosette leaves, cauline leaves, shoot apex, stems and flowers.

It is found in the cell membrane. The protein localises to the nucleus. Transcriptional activator activated by proteolytic cleavage through regulated intramembrane proteolysis (RIP), probably via metalloprotease activity. Regulates gibberellic acid-mediated salt-responsive repression of seed germination and flowering via FT, thus delaying seed germination under high salinity conditions. The chain is NAC domain-containing protein 40 from Arabidopsis thaliana (Mouse-ear cress).